Here is a 956-residue protein sequence, read N- to C-terminus: Plasma membrane ATPase 3 (956 aa).

The Cytoplasmic segment spans residues 1–65 (MGEKPEVLDA…EKKESKFSKF (65 aa)). A helical membrane pass occupies residues 66 to 85 (LGFMWNPLSWVMEAAAIMAI). Residues 86 to 97 (ALANGGGKPPDW) are Extracellular-facing. The helical transmembrane segment at 98 to 118 (QDFVGIITLLIINSTISFIEE) threads the bilayer. The Cytoplasmic portion of the chain corresponds to 119–247 (NNAGNAAAAL…GHFQKVLTAI (129 aa)). A helical membrane pass occupies residues 248-268 (GNFCICSIAVGMIIEIIVMYP). Residues 269 to 278 (IQHRKYRPGI) lie on the Extracellular side of the membrane. A helical transmembrane segment spans residues 279–300 (DNLLVLLIGGIPIAMPTVLSVT). The Cytoplasmic portion of the chain corresponds to 301-647 (MAIGSHRLAQ…TSRAIFQRMK (347 aa)). D333 functions as the 4-aspartylphosphate intermediate in the catalytic mechanism. 2 residues coordinate Mg(2+): D592 and D596. A helical transmembrane segment spans residues 648–669 (NYTIYAVSITIRIVLGFMLLAL). Residues 670–674 (IWQFD) lie on the Extracellular side of the membrane. Residues 675 to 697 (FPPFMVLIIAILNDGTIMTISKD) traverse the membrane as a helical segment. Over 698–713 (RVKPSPLPDSWKLAEI) the chain is Cytoplasmic. A helical membrane pass occupies residues 714–734 (FTTGVVLGGYLAMMTVIFFWA). Over 735–759 (AYKTNFFPRVFGVSTLEKTATDDFR) the chain is Extracellular. Residues 760 to 780 (KLASAIYLQVSTISQALIFVT) traverse the membrane as a helical segment. At 781–792 (RSRSWSFMERPG) the chain is on the cytoplasmic side. Residues 793–813 (LLLVVAFFIAQLVATLIAVYA) traverse the membrane as a helical segment. The Extracellular segment spans residues 814-822 (NWSFAAIEG). A helical transmembrane segment spans residues 823-843 (IGWGWAGVIWLYNIVFYIPLD). The Cytoplasmic segment spans residues 844 to 956 (LXXFLIRYAL…IETIQQAYTV (113 aa)).

The protein belongs to the cation transport ATPase (P-type) (TC 3.A.3) family. Type IIIA subfamily. Expressed in roots, stems, leaves from both vegetative and flowering plants, and flowers at early and late stages of development with highest expression levels found in flowers and root tissue.

It localises to the cell membrane. It carries out the reaction ATP + H2O + H(+)(in) = ADP + phosphate + 2 H(+)(out). Its function is as follows. The plasma membrane ATPase of plants and fungi is a hydrogen ion pump. The proton gradient it generates drives the active transport of nutrients by H(+)-symport. The resulting external acidification and/or internal alkinization may mediate growth responses. This chain is Plasma membrane ATPase 3 (PMA3), found in Nicotiana plumbaginifolia (Leadwort-leaved tobacco).